Consider the following 223-residue polypeptide: MTGDRELQALLRLTAWLSPAFPVGSFAYSGGLERAVADGLVTDAVSLAAWIGTLIGYGSVWNDAVLLAESHRWQAEPARLFEIAALAEALAGSRERHQETMLLGDAFLTAARAWPDGVFERLPDKAAYPVAVGAVTGAHGIGPEKALAVFLHAYASQAVSSGIRLGVTGQRDGVAVLAGLEECITEVARRAAASTLDDLGSATVQADIAGLRHETQATRLFRS.

It belongs to the UreF family. As to quaternary structure, ureD, UreF and UreG form a complex that acts as a GTP-hydrolysis-dependent molecular chaperone, activating the urease apoprotein by helping to assemble the nickel containing metallocenter of UreC. The UreE protein probably delivers the nickel.

It is found in the cytoplasm. Functionally, required for maturation of urease via the functional incorporation of the urease nickel metallocenter. In Rhizobium leguminosarum bv. trifolii (strain WSM2304), this protein is Urease accessory protein UreF.